The following is a 119-amino-acid chain: Protein TusC (119 aa).

This sequence belongs to the DsrF/TusC family. As to quaternary structure, heterohexamer, formed by a dimer of trimers. The hexameric TusBCD complex contains 2 copies each of TusB, TusC and TusD. The TusBCD complex interacts with TusE.

The protein resides in the cytoplasm. In terms of biological role, part of a sulfur-relay system required for 2-thiolation of 5-methylaminomethyl-2-thiouridine (mnm(5)s(2)U) at tRNA wobble positions. This chain is Protein TusC, found in Klebsiella pneumoniae subsp. pneumoniae (strain ATCC 700721 / MGH 78578).